Here is a 199-residue protein sequence, read N- to C-terminus: MARVLVLYYSSYGHIEKMAEAIAEGARGAGAQVDIKRVPETVPEEIAKKANFKLDQQAPIATVADLEQYDAIVVGTGTRYGRISSQMAAFLDQTGGLWMRGALNGKVGAAFASTATQHGGQETTLFSIITNLMHLGMIIVGLPYSHQGMMNMTEIVGGAPYGATTIAAGDGSRQPSAIDLEGARHQGELVAKTAAKLFG.

The Flavodoxin-like domain maps to 4–190 (VLVLYYSSYG…EGARHQGELV (187 aa)). FMN-binding positions include 10-15 (SSYGHI) and 78-80 (TRY). Tyrosine 12 contacts NAD(+). Tryptophan 98 lines the substrate pocket. Residues 113–119 (STATQHG) and histidine 134 contribute to the FMN site.

The protein belongs to the WrbA family. FMN serves as cofactor.

It catalyses the reaction a quinone + NADH + H(+) = a quinol + NAD(+). The catalysed reaction is a quinone + NADPH + H(+) = a quinol + NADP(+). In Paraburkholderia phymatum (strain DSM 17167 / CIP 108236 / LMG 21445 / STM815) (Burkholderia phymatum), this protein is NAD(P)H dehydrogenase (quinone).